We begin with the raw amino-acid sequence, 90 residues long: UPF0335 protein R02793 (90 aa).

Belongs to the UPF0335 family.

The protein is UPF0335 protein R02793 of Rhizobium meliloti (strain 1021) (Ensifer meliloti).